Consider the following 317-residue polypeptide: Transaldolase (317 aa).

Lys132 (schiff-base intermediate with substrate) is an active-site residue.

It belongs to the transaldolase family. Type 1 subfamily. Homodimer.

The protein localises to the cytoplasm. The catalysed reaction is D-sedoheptulose 7-phosphate + D-glyceraldehyde 3-phosphate = D-erythrose 4-phosphate + beta-D-fructose 6-phosphate. Its pathway is carbohydrate degradation; pentose phosphate pathway; D-glyceraldehyde 3-phosphate and beta-D-fructose 6-phosphate from D-ribose 5-phosphate and D-xylulose 5-phosphate (non-oxidative stage): step 2/3. Functionally, transaldolase is important for the balance of metabolites in the pentose-phosphate pathway. This chain is Transaldolase, found in Actinobacillus succinogenes (strain ATCC 55618 / DSM 22257 / CCUG 43843 / 130Z).